The following is a 414-amino-acid chain: Putative dipeptidase ARB_02715 (414 aa).

An N-terminal signal peptide occupies residues 1 to 20; that stretch reads MAALFVSLLALTSLVPVQGA. Residues His-45, Asp-47, and Glu-157 each contribute to the Zn(2+) site. Cys-96 and Cys-186 are joined by a disulfide. Residue His-184 coordinates substrate. Zn(2+) contacts are provided by His-228 and His-249. Substrate is bound by residues Arg-260 and Asp-320. Asn-392 carries N-linked (GlcNAc...) asparagine glycosylation.

It belongs to the metallo-dependent hydrolases superfamily. Peptidase M19 family. Zn(2+) serves as cofactor.

The enzyme catalyses an L-aminoacyl-L-amino acid + H2O = 2 an L-alpha-amino acid. Hydrolyzes a wide range of dipeptides. The sequence is that of Putative dipeptidase ARB_02715 from Arthroderma benhamiae (strain ATCC MYA-4681 / CBS 112371) (Trichophyton mentagrophytes).